The chain runs to 297 residues: Large ribosomal subunit protein uL10 (297 aa).

It belongs to the universal ribosomal protein uL10 family. As to quaternary structure, part of the 50S ribosomal subunit. Forms part of the ribosomal stalk which helps the ribosome interact with GTP-bound translation factors. Forms a heptameric L10(L12)2(L12)2(L12)2 complex, where L10 forms an elongated spine to which the L12 dimers bind in a sequential fashion.

Its function is as follows. Forms part of the ribosomal stalk, playing a central role in the interaction of the ribosome with GTP-bound translation factors. The sequence is that of Large ribosomal subunit protein uL10 from Methanococcus voltae.